The chain runs to 544 residues: Spore germination protein KA (544 aa).

Positions 1 to 36 (MPLFSKRKNNTDSKDKQNTDERNQEQQQEKERPVLI) are disordered. Residues 9-33 (NNTDSKDKQNTDERNQEQQQEKERP) show a composition bias toward basic and acidic residues. The next 5 membrane-spanning stretches (helical) occupy residues 279 to 299 (FAII…FVQF), 321 to 341 (VLVF…TTFH), 392 to 412 (AVSI…GIVS), 416 to 436 (VIIV…AMAI), and 443 to 463 (FIFI…GIIM). Residues 504–523 (KRPESVSKEDKVRQGKDQRP) are compositionally biased toward basic and acidic residues. The segment at 504 to 544 (KRPESVSKEDKVRQGKDQRPEPAASRGMVNKDLEEGDQNGT) is disordered.

Belongs to the GerABKA family.

It is found in the cell membrane. Its function is as follows. Involved in the germination response to the combination of glucose, fructose, L-asparagine, and KCl. This Bacillus subtilis (strain 168) protein is Spore germination protein KA (gerKA).